Here is a 186-residue protein sequence, read N- to C-terminus: RNA polymerase sigma factor NccH (186 aa).

A Polymerase core binding motif is present at residues 49-62 (DIVQDTFIAAWHAL). A DNA-binding region (H-T-H motif) is located at residues 152-171 (HPEAAMALGTSAKAVESRVA).

It belongs to the sigma-70 factor family. ECF subfamily.

Sigma factors are initiation factors that promote the attachment of RNA polymerase to specific initiation sites and are then released. This sigma factor regulates the genes for a membrane-located efflux system that confers resistance to nickel, cobalt and cadmium. The chain is RNA polymerase sigma factor NccH (nccH) from Alcaligenes xylosoxydans xylosoxydans (Achromobacter xylosoxidans).